Reading from the N-terminus, the 339-residue chain is Uracil nucleotide/cysteinyl leukotriene receptor (339 aa).

The Extracellular portion of the chain corresponds to 1–36; that stretch reads MDGLETALPSLTDNASLAYSEQCGQETPLENMLFAC. The N-linked (GlcNAc...) asparagine glycan is linked to Asn14. A helical transmembrane segment spans residues 37–57; it reads FYLLDFILAFVGNALALWLFI. At 58 to 64 the chain is on the cytoplasmic side; sequence WDHKSGT. Residues 65-85 form a helical membrane-spanning segment; that stretch reads PANVFLMHLAVADLSCVLVLP. Over 86 to 105 the chain is Extracellular; the sequence is TRLVYHFSGNHWPFGEIPCR. Cys104 and Cys181 form a disulfide bridge. The helical transmembrane segment at 106–126 threads the bilayer; sequence LTGFLFYLNMYASIYFLTCIS. Topologically, residues 127–147 are cytoplasmic; sequence ADRFLAIVHPVKSLKLRRPLY. Residues 148 to 168 form a helical membrane-spanning segment; the sequence is AHLACAFLWIVVAVAMAPLLV. The Extracellular portion of the chain corresponds to 169–195; that stretch reads SPQTVQTNHTVVCLQLYREKASHHALA. Asn176 carries an N-linked (GlcNAc...) asparagine glycan. A helical transmembrane segment spans residues 196-216; the sequence is SLAVAFTFPFITTVTCYLLII. Residues 217 to 232 are Cytoplasmic-facing; sequence RSLRQGPRIEKHLKNK. A helical transmembrane segment spans residues 233–253; that stretch reads AVRMIAMVLAIFLICFVPYHI. At 254–280 the chain is on the extracellular side; it reads HRSVYVLHYRGGGTSCSAQRALALGNR. The chain crosses the membrane as a helical span at residues 281 to 301; the sequence is ITSCLTSLNGALDPVMYFFVA. Residues 302–339 are Cytoplasmic-facing; the sequence is EKFRHALCNLLCSKRLTGPPPSFEGKTNESSLSARSEL.

The protein belongs to the G-protein coupled receptor 1 family. As to expression, expressed in brain, kidney, and heart. Highest level in brain.

The protein localises to the cell membrane. Functionally, dual specificity receptor for uracil nucleotides and cysteinyl leukotrienes (CysLTs). Signals through G(i) and inhibition of adenylyl cyclase. May mediate brain damage by nucleotides and CysLTs following ischemia. In Rattus norvegicus (Rat), this protein is Uracil nucleotide/cysteinyl leukotriene receptor.